Reading from the N-terminus, the 901-residue chain is HTH-type transcriptional regulator MalT (901 aa).

An ATP-binding site is contributed by 39-46 (SPAGYGKT). The 66-residue stretch at 829–894 (ELIRTSPLTQ…AAVQHAQKLL (66 aa)) folds into the HTH luxR-type domain. Positions 853–872 (NEQIAGELEVAATTIKTHIR) form a DNA-binding region, H-T-H motif.

Belongs to the MalT family. Monomer in solution. Oligomerizes to an active state in the presence of the positive effectors ATP and maltotriose.

Its activity is regulated as follows. Activated by ATP and maltotriose, which are both required for DNA binding. Its function is as follows. Positively regulates the transcription of the maltose regulon whose gene products are responsible for uptake and catabolism of malto-oligosaccharides. Specifically binds to the promoter region of its target genes, recognizing a short DNA motif called the MalT box. In Shigella boydii serotype 4 (strain Sb227), this protein is HTH-type transcriptional regulator MalT.